The sequence spans 187 residues: CASP-like protein SELMODRAFT_416718 (187 aa).

Residues 1-21 form a helical membrane-spanning segment; that stretch reads MMFGGVGMATLPLSLIFAFKN. Topologically, residues 22–100 are extracellular; it reads RPKCVITRAQ…EAFPQGEKAD (79 aa). Residues 101–119 traverse the membrane as a helical segment; sequence TSWALTVLFYLAKLVFGIL. Topologically, residues 120–125 are cytoplasmic; it reads GLALSV. Residues 126–145 traverse the membrane as a helical segment; it reads IWLLHIIVFMLVNPPAFPFL. The Extracellular segment spans residues 146 to 155; it reads NQVFIQLDSA. Residues 156–176 traverse the membrane as a helical segment; sequence WGLLGTTAFAIFCYYLVMSVI. Residues 177 to 187 lie on the Cytoplasmic side of the membrane; the sequence is SGEMHSIYPMK.

Belongs to the Casparian strip membrane proteins (CASP) family. Homodimer and heterodimers.

Its subcellular location is the cell membrane. The protein is CASP-like protein SELMODRAFT_416718 of Selaginella moellendorffii (Spikemoss).